The sequence spans 172 residues: Mitochondrial import inner membrane translocase subunit Tim17-B (172 aa).

Residues C9 and C78 are joined by a disulfide bond. 3 helical membrane passes run 17–37 (CGGA…IKGF), 61–77 (QIGG…STID), and 113–133 (VGSA…GILL). Residues 146–172 (PFLEDPSQLPPKDGTPAPGYPSYQQYH) form a disordered region.

The protein belongs to the Tim17/Tim22/Tim23 family. As to quaternary structure, component of the TIM23 complex at least composed of TIMM23, TIMM17 (TIMM17A or TIMM17B) and TIMM50. The complex interacts with the TIMM44 component of the PAM complex and with DNAJC15. Post-translationally, forms one disulfide bond. As to expression, expression is abundant in heart and skeletal muscle, intermediate in brain, and weak in pancreas, placenta, kidney and liver.

It localises to the mitochondrion inner membrane. Its function is as follows. Essential component of the TIM23 complex, a complex that mediates the translocation of transit peptide-containing proteins across the mitochondrial inner membrane. This is Mitochondrial import inner membrane translocase subunit Tim17-B (TIMM17B) from Homo sapiens (Human).